Here is a 289-residue protein sequence, read N- to C-terminus: Myoblast determination protein 1 homolog A (289 aa).

A bHLH domain is found at 95–146 (DRRKAATMRERRRLSKVNEAFETLKRYTSTNPNQRLPKVEILRNAIRYIESL). The disordered stretch occupies residues 165–212 (SGDSDASSPRSNCSDGMMDYNSPPCGSRRRNSYDSSFYSDSPNDSRLG). Polar residues-rich tracts occupy residues 168–178 (SDASSPRSNCS) and 197–208 (YDSSFYSDSPND).

As to quaternary structure, efficient DNA binding requires dimerization with another bHLH protein.

It localises to the nucleus. Its function is as follows. May act as a transcriptional activator that promotes transcription of muscle-specific target genes and plays a role in muscle differentiation. This is Myoblast determination protein 1 homolog A (myod1-a) from Xenopus laevis (African clawed frog).